Consider the following 177-residue polypeptide: Large ribosomal subunit protein uL6 (177 aa).

The protein belongs to the universal ribosomal protein uL6 family. As to quaternary structure, part of the 50S ribosomal subunit.

This protein binds to the 23S rRNA, and is important in its secondary structure. It is located near the subunit interface in the base of the L7/L12 stalk, and near the tRNA binding site of the peptidyltransferase center. The polypeptide is Large ribosomal subunit protein uL6 (Nitrosospira multiformis (strain ATCC 25196 / NCIMB 11849 / C 71)).